A 162-amino-acid chain; its full sequence is Putative ankyrin repeat protein R664 (162 aa).

ANK repeat units follow at residues 10 to 40, 47 to 78, and 82 to 111; these read KKLVEFLLYSNQDCSLIVIDALITIGANVNY, NDTPILSVITKTSESNPETVKLLLDKGADVNY, and YHETALMRTIKYGNFGIAKILLDYGANPYL.

This chain is Putative ankyrin repeat protein R664, found in Acanthamoeba polyphaga mimivirus (APMV).